The chain runs to 464 residues: Hepatocyte nuclear factor 4-alpha (464 aa).

A DNA-binding region (nuclear receptor) is located at residues 57 to 132; sequence NSLCAICGDR…AGMKKEAVQN (76 aa). NR C4-type zinc fingers lie at residues 60-80 and 96-120; these read CAIC…CDGC and CRFS…LKKC. The NR LBD domain occupies 147–376; the sequence is SSLPSINVLI…NLLQEMLLGG (230 aa). A 9aaTAD motif is present at residues 367–375; it reads NLLQEMLLG. Residues 410–421 show a composition bias toward polar residues; the sequence is SQLHNGQMSTPE. Positions 410-433 are disordered; it reads SQLHNGQMSTPETPQPSPPAGSGA.

Belongs to the nuclear hormone receptor family. NR2 subfamily. As to quaternary structure, homodimerization is required for HNF4-alpha to bind to its recognition site. As to expression, expressed in liver and kidney.

It localises to the nucleus. In terms of biological role, transcriptional regulator; binds and activates the promoter for the HNF1-alpha gene. Potential initiator of a transcriptional cascade within a subset of cells committed to a specific developmental program. Could be a determinant for asymmetry in early development. May play a role in the regulation of the circadian clock. The chain is Hepatocyte nuclear factor 4-alpha (hnf4a) from Xenopus laevis (African clawed frog).